The chain runs to 495 residues: Probable cytosol aminopeptidase (495 aa).

Mn(2+) is bound by residues Lys261 and Asp266. The active site involves Lys273. Residues Asp284, Asp343, and Glu345 each contribute to the Mn(2+) site. The active site involves Arg347.

This sequence belongs to the peptidase M17 family. Requires Mn(2+) as cofactor.

Its subcellular location is the cytoplasm. It catalyses the reaction Release of an N-terminal amino acid, Xaa-|-Yaa-, in which Xaa is preferably Leu, but may be other amino acids including Pro although not Arg or Lys, and Yaa may be Pro. Amino acid amides and methyl esters are also readily hydrolyzed, but rates on arylamides are exceedingly low.. The enzyme catalyses Release of an N-terminal amino acid, preferentially leucine, but not glutamic or aspartic acids.. Its function is as follows. Presumably involved in the processing and regular turnover of intracellular proteins. Catalyzes the removal of unsubstituted N-terminal amino acids from various peptides. This is Probable cytosol aminopeptidase from Chelativorans sp. (strain BNC1).